Here is a 575-residue protein sequence, read N- to C-terminus: Electron transfer flavoprotein-ubiquinone oxidoreductase, mitochondrial (575 aa).

A mitochondrion-targeting transit peptide spans 1-33 (MQRVLRAAAAGIGHASGHRAPRWGAAAAAARWL). 44–58 (VVVVGAGPAGLAAAI) provides a ligand contact to FAD. The stretch at 82–103 (VGAHVLSGNVFEPRALDELIPK) is an intramembrane region. Positions 276 and 277 each coordinate a ubiquinone. Residues 343–363 (IPNPVFPGGAIIGCSAGFLNV) lie within the membrane without spanning it. 4 residues coordinate [4Fe-4S] cluster: Cys-520, Cys-544, Cys-547, and Cys-550. Residues 535–564 (QKLHINAQNCLHCKACDIKDPKQNIEWTVP) enclose the 4Fe-4S ferredoxin-type domain.

The protein belongs to the ETF-QO/FixC family. [4Fe-4S] cluster is required as a cofactor. Requires FAD as cofactor.

The protein resides in the mitochondrion inner membrane. The catalysed reaction is a ubiquinone + reduced [electron-transfer flavoprotein] = a ubiquinol + oxidized [electron-transfer flavoprotein] + H(+). In terms of biological role, accepts electrons from ETF and reduces ubiquinone. The polypeptide is Electron transfer flavoprotein-ubiquinone oxidoreductase, mitochondrial (Oryza sativa subsp. japonica (Rice)).